We begin with the raw amino-acid sequence, 284 residues long: Halorhodopsin (284 aa).

Residues 1–30 are Extracellular-facing; it reads MIETAAADILAGGMVPLEMTQTQIFEAVQS. The chain crosses the membrane as a helical span at residues 31–56; that stretch reads DTLLASSLWINIALAGLSILLFVYMG. The Cytoplasmic segment spans residues 57–62; sequence RNVEDP. A helical membrane pass occupies residues 63 to 86; sequence RAQLIFVATLMVPLVSISSYTGLV. Topologically, residues 87 to 110 are extracellular; the sequence is SGLTVSFLEMPAGHALAGQEVLTP. Residues 111 to 132 traverse the membrane as a helical segment; it reads WGRYLTWALSTPMILIAVGLLA. At 133 to 135 the chain is on the cytoplasmic side; the sequence is GSN. A helical membrane pass occupies residues 136-159; sequence TTKLFTAVVADIGMCVTGLAAALT. The Extracellular segment spans residues 160–162; that stretch reads TSS. A helical membrane pass occupies residues 163–185; it reads YLLRWVWYAISCAFFVVVLYILL. Residues 186–197 are Cytoplasmic-facing; it reads AEWAEDAEIAGT. A helical transmembrane segment spans residues 198-221; it reads ADIFNTLKVLTVVLWLGYPIFWAL. Over 222 to 230 the chain is Extracellular; it reads GAEGLAVLD. A helical membrane pass occupies residues 231–259; that stretch reads VAITSWAYSGMDIVAKYLFAFLLLRWVVN. Lys246 carries the post-translational modification N6-(retinylidene)lysine. Topologically, residues 260-284 are cytoplasmic; that stretch reads NERTVADVASGLGSGSRGGAAPADD.

The protein belongs to the archaeal/bacterial/fungal opsin family.

It localises to the cell membrane. Its function is as follows. Light-driven chloride pump. In Halobacterium sp. (strain SG1), this protein is Halorhodopsin (hop).